Reading from the N-terminus, the 612-residue chain is Probable cytosolic Fe-S cluster assembly factor SJAG_02895 (612 aa).

13 to 20 serves as a coordination point for ATP; it reads GKGGVGKS. [4Fe-4S] cluster is bound by residues C200 and C203. WD repeat units follow at residues 287 to 326, 330 to 370, 375 to 414, 420 to 459, 464 to 503, 528 to 566, and 574 to 612; these read GHRGRIWSVAVHPTLPLVATASEDKSVRVFQAQTGELIHV, YHTR…WECV, GHENEVKCVAWSHDGVYLATCSRDKSVWIWEAMEDDEFDC, EHTQDVKVVAWHPKDDLLVSGSYDNTIRFWRDDGDDWVQT, SHTSTVWALNFSPDGRLLASGDGEGEVFIWEKLVSNEDAA, TFTEPVYTLGWKDDHTLCASGAEGTIGLFAYEDDVSTWH, and AHDVYEINTIAWTNDSRLLSGGDDGLCNVWKLSEADQTA.

The protein in the N-terminal section; belongs to the Mrp/NBP35 ATP-binding proteins family. NUBP2/CFD1 subfamily. This sequence in the C-terminal section; belongs to the WD repeat CIA1 family. As to quaternary structure, heterotetramer of 2 nbp35 and 2 SJAG_02895 chains. [4Fe-4S] cluster serves as cofactor.

The protein localises to the cytoplasm. It localises to the nucleus. Functionally, fusion protein of two essential components of the cytosolic iron-sulfur (Fe/S) protein assembly (CIA) machinery. Required for maturation of extramitochondrial Fe-S proteins. May form a heterotetramer with nubp35, functioning as a Fe-S scaffold complex, mediating the de novo assembly of an Fe-S cluster and its transfer to target apoproteins. The chain is Probable cytosolic Fe-S cluster assembly factor SJAG_02895 from Schizosaccharomyces japonicus (strain yFS275 / FY16936) (Fission yeast).